Consider the following 162-residue polypeptide: Phenazine biosynthesis protein PhzB 2 (162 aa).

Thr-91 bears the Phosphothreonine mark.

This sequence belongs to the PhzA/PhzB family.

Involved in the biosynthesis of the antibiotic phenazine, a nitrogen-containing heterocyclic molecule having important roles in virulence, competition and biological control. The protein is Phenazine biosynthesis protein PhzB 2 (phzB2) of Pseudomonas aeruginosa (strain UCBPP-PA14).